The sequence spans 303 residues: MVKRMLEVKLFGIRFENPLILASGVVDMTPELLRRAHNEGAGGVVTKSIGKEPRKGYDNPTIVELPYGLINAMGLPNPGWEAFLNEFIDERFDFPVIVSIFGGTPEEFAFLAEKLEPVADAFELNLSCPHAKGYGMEIGQDPKNVYEVVKAVKDVTDKPVIAKLTPNVNDITKLGLAAERGGADGVSAINTVKAIAIDIYAKRPILSNKVGGYSGPGIKPIALRAVYDLAKVLDIPVIGIGGITSWRDAVEFLLAGASALQIGTAVYLRGFKVFKEISNGIIEYLKEEGFSSIRDIIGLALKV.

FMN-binding positions include S23 and 47-48 (KS). Substrate contacts are provided by residues K47, 71-75 (NAMGL), and N125. N125 lines the FMN pocket. C128 functions as the Nucleophile in the catalytic mechanism. FMN is bound by residues K163 and I189. 190-191 (NT) provides a ligand contact to substrate. Residues G215, 241–242 (GG), and 263–264 (GT) each bind FMN.

The protein belongs to the dihydroorotate dehydrogenase family. Type 1 subfamily. In terms of assembly, heterotetramer of 2 PyrK and 2 PyrD type B subunits. It depends on FMN as a cofactor.

The protein localises to the cytoplasm. It carries out the reaction (S)-dihydroorotate + NAD(+) = orotate + NADH + H(+). It participates in pyrimidine metabolism; UMP biosynthesis via de novo pathway; orotate from (S)-dihydroorotate (NAD(+) route): step 1/1. In terms of biological role, catalyzes the conversion of dihydroorotate to orotate with NAD(+) as electron acceptor. The sequence is that of Dihydroorotate dehydrogenase B (NAD(+)), catalytic subunit (pyrD) from Pyrococcus horikoshii (strain ATCC 700860 / DSM 12428 / JCM 9974 / NBRC 100139 / OT-3).